The chain runs to 315 residues: tRNA pseudouridine synthase B (315 aa).

Substrate is bound at residue histidine 42. The Nucleophile role is filled by aspartate 47. 3 residues coordinate substrate: tyrosine 75, tyrosine 178, and leucine 199.

The protein belongs to the pseudouridine synthase TruB family. Type 1 subfamily.

It catalyses the reaction uridine(55) in tRNA = pseudouridine(55) in tRNA. In terms of biological role, responsible for synthesis of pseudouridine from uracil-55 in the psi GC loop of transfer RNAs. In Photorhabdus laumondii subsp. laumondii (strain DSM 15139 / CIP 105565 / TT01) (Photorhabdus luminescens subsp. laumondii), this protein is tRNA pseudouridine synthase B.